The following is a 311-amino-acid chain: Aspartate carbamoyltransferase catalytic subunit (311 aa).

Carbamoyl phosphate is bound by residues Arg55 and Thr56. An L-aspartate-binding site is contributed by Lys85. Arg106, His135, and Gln138 together coordinate carbamoyl phosphate. L-aspartate-binding residues include Arg168 and Arg230. Carbamoyl phosphate is bound by residues Leu268 and Pro269.

The protein belongs to the aspartate/ornithine carbamoyltransferase superfamily. ATCase family. Heterododecamer (2C3:3R2) of six catalytic PyrB chains organized as two trimers (C3), and six regulatory PyrI chains organized as three dimers (R2).

It carries out the reaction carbamoyl phosphate + L-aspartate = N-carbamoyl-L-aspartate + phosphate + H(+). It participates in pyrimidine metabolism; UMP biosynthesis via de novo pathway; (S)-dihydroorotate from bicarbonate: step 2/3. Catalyzes the condensation of carbamoyl phosphate and aspartate to form carbamoyl aspartate and inorganic phosphate, the committed step in the de novo pyrimidine nucleotide biosynthesis pathway. The sequence is that of Aspartate carbamoyltransferase catalytic subunit from Escherichia fergusonii (strain ATCC 35469 / DSM 13698 / CCUG 18766 / IAM 14443 / JCM 21226 / LMG 7866 / NBRC 102419 / NCTC 12128 / CDC 0568-73).